A 111-amino-acid polypeptide reads, in one-letter code: Wound-induced proteinase inhibitor 1 (111 aa).

A signal peptide spans Met-1–Ala-23. The propeptide occupies Arg-24–Leu-36.

This sequence belongs to the protease inhibitor I13 (potato type I serine protease inhibitor) family.

Its subcellular location is the secreted. The polypeptide is Wound-induced proteinase inhibitor 1 (PIIF) (Solanum lycopersicum (Tomato)).